Reading from the N-terminus, the 301-residue chain is Probable alpha-L-glutamate ligase (301 aa).

The region spanning 104-287 (LQLLSRKGIG…VAGMIYEFIE (184 aa)) is the ATP-grasp domain. ATP is bound by residues lysine 141, 178–179 (EF), aspartate 187, and 211–213 (RSN). Mg(2+) is bound by residues aspartate 248, glutamate 260, and asparagine 262. Residues aspartate 248, glutamate 260, and asparagine 262 each contribute to the Mn(2+) site.

This sequence belongs to the RimK family. The cofactor is Mg(2+). It depends on Mn(2+) as a cofactor.

The sequence is that of Probable alpha-L-glutamate ligase from Vibrio vulnificus (strain CMCP6).